Consider the following 328-residue polypeptide: Anthranilate phosphoribosyltransferase (328 aa).

5-phospho-alpha-D-ribose 1-diphosphate-binding positions include G79, G82 to D83, T87, N89 to T92, K107 to S115, and S119. G79 serves as a coordination point for anthranilate. S91 provides a ligand contact to Mg(2+). N110 lines the anthranilate pocket. R165 is an anthranilate binding site. Mg(2+) is bound by residues D223 and E224.

Belongs to the anthranilate phosphoribosyltransferase family. In terms of assembly, homodimer. Requires Mg(2+) as cofactor.

It carries out the reaction N-(5-phospho-beta-D-ribosyl)anthranilate + diphosphate = 5-phospho-alpha-D-ribose 1-diphosphate + anthranilate. It functions in the pathway amino-acid biosynthesis; L-tryptophan biosynthesis; L-tryptophan from chorismate: step 2/5. In terms of biological role, catalyzes the transfer of the phosphoribosyl group of 5-phosphorylribose-1-pyrophosphate (PRPP) to anthranilate to yield N-(5'-phosphoribosyl)-anthranilate (PRA). The polypeptide is Anthranilate phosphoribosyltransferase (Cytophaga hutchinsonii (strain ATCC 33406 / DSM 1761 / CIP 103989 / NBRC 15051 / NCIMB 9469 / D465)).